The chain runs to 321 residues: Phospho-N-acetylmuramoyl-pentapeptide-transferase (321 aa).

Transmembrane regions (helical) follow at residues 1–21 (MIFI…PILI), 50–70 (MGGL…IIFV), 76–96 (IILL…DDYI), 112–132 (FLAQ…FHLV), 140–160 (IPFV…IVFW), 176–196 (GLAT…SYML), 200–220 (AIGI…PYNL), 225–245 (VFMG…ISIM), 250–270 (LSLI…MLQV), and 300–320 (VVTV…WIGV).

It belongs to the glycosyltransferase 4 family. MraY subfamily. It depends on Mg(2+) as a cofactor.

It localises to the cell membrane. The enzyme catalyses UDP-N-acetyl-alpha-D-muramoyl-L-alanyl-gamma-D-glutamyl-L-lysyl-D-alanyl-D-alanine + di-trans,octa-cis-undecaprenyl phosphate = Mur2Ac(oyl-L-Ala-gamma-D-Glu-L-Lys-D-Ala-D-Ala)-di-trans,octa-cis-undecaprenyl diphosphate + UMP. The protein operates within cell wall biogenesis; peptidoglycan biosynthesis. Its function is as follows. Catalyzes the initial step of the lipid cycle reactions in the biosynthesis of the cell wall peptidoglycan: transfers peptidoglycan precursor phospho-MurNAc-pentapeptide from UDP-MurNAc-pentapeptide onto the lipid carrier undecaprenyl phosphate, yielding undecaprenyl-pyrophosphoryl-MurNAc-pentapeptide, known as lipid I. This is Phospho-N-acetylmuramoyl-pentapeptide-transferase from Staphylococcus epidermidis (strain ATCC 35984 / DSM 28319 / BCRC 17069 / CCUG 31568 / BM 3577 / RP62A).